Here is a 210-residue protein sequence, read N- to C-terminus: Protein GET1 (210 aa).

Residues 1-4 (MPSL) are Lumenal-facing. Residues 5–24 (LIIVLIIHVVTYLINTIGAN) traverse the membrane as a helical segment. Residues 25-110 (TIDSLLWLLY…SFDLAVKSIR (86 aa)) lie on the Cytoplasmic side of the membrane. Residues 39–95 (NQTSQTANEQRRLKREVMQLKREMNATSSQDEFAKWAKLRRRHDKTMEEYEAKNKAL) are a coiled coil. The chain crosses the membrane as a helical span at residues 111–131 (FFSTTGLKLFLQFWCSKTPIF). Over 132–155 (ELPRGWIPWQVEWVLSFPRAPLGT) the chain is Lumenal. The helical transmembrane segment at 156–172 (VSIQIWGGVCATVVSLA) threads the bilayer. The Cytoplasmic segment spans residues 173–210 (GDAIGVVNVYLTSKAPKQKEPATSGENSARPMAIKKEL). The tract at residues 189 to 210 (KQKEPATSGENSARPMAIKKEL) is disordered.

It belongs to the WRB/GET1 family. Interacts with GET3.

It is found in the endoplasmic reticulum membrane. Its function is as follows. Required for the post-translational delivery of tail-anchored (TA) proteins to the endoplasmic reticulum. Acts as a membrane receptor for soluble GET3, which recognizes and selectively binds the transmembrane domain of TA proteins in the cytosol. In Coccidioides immitis (strain RS) (Valley fever fungus), this protein is Protein GET1.